The primary structure comprises 961 residues: Copper-exporting P-type ATPase (961 aa).

HMA domains follow at residues 3 to 64 (QTTL…YQAT) and 69 to 130 (PDVE…YHAT). Cys-14, Cys-17, Cys-80, and Cys-83 together coordinate Cu(+). Disordered stretches follow at residues 131–153 (QQGI…PESL) and 178–201 (VLPT…TASA). Residues 142–151 (LTHSAQSQPE) show a composition bias toward polar residues. One can recognise an HMA 3 domain in the interval 226–289 (ESVQLLLTGM…AVKNAGYGAE (64 aa)). Cu(+) is bound by residues Cys-237 and Cys-240. 5 consecutive transmembrane segments (helical) span residues 316–336 (AALG…GGSM), 345–365 (PWLI…GHFY), 381–401 (TLVA…NIWP), 565–585 (AVFV…WYFF), and 592–612 (VYTL…ALGL). The active-site 4-aspartylphosphate intermediate is the Asp-650. 2 residues coordinate Mg(2+): Asp-847 and Asp-851. The next 3 helical transmembrane spans lie at 860–880 (VGIA…ITLM), 906–926 (LGAF…LYPF), and 928–948 (GTLL…ITVV).

The protein belongs to the cation transport ATPase (P-type) (TC 3.A.3) family. Type IB subfamily.

Its subcellular location is the cell membrane. The catalysed reaction is Cu(+)(in) + ATP + H2O = Cu(+)(out) + ADP + phosphate + H(+). Involved in copper export. This Yersinia pestis protein is Copper-exporting P-type ATPase (copA).